The following is a 481-amino-acid chain: Glutamate--tRNA ligase 1 (481 aa).

A 'HIGH' region motif is present at residues 11–21 (PSPTGSLHIGG). Residues 244 to 248 (KLSKR) carry the 'KMSKS' region motif. Lys247 contacts ATP.

It belongs to the class-I aminoacyl-tRNA synthetase family. Glutamate--tRNA ligase type 1 subfamily. Monomer.

Its subcellular location is the cytoplasm. The catalysed reaction is tRNA(Glu) + L-glutamate + ATP = L-glutamyl-tRNA(Glu) + AMP + diphosphate. In terms of biological role, catalyzes the attachment of glutamate to tRNA(Glu) in a two-step reaction: glutamate is first activated by ATP to form Glu-AMP and then transferred to the acceptor end of tRNA(Glu). The sequence is that of Glutamate--tRNA ligase 1 from Caldanaerobacter subterraneus subsp. tengcongensis (strain DSM 15242 / JCM 11007 / NBRC 100824 / MB4) (Thermoanaerobacter tengcongensis).